The chain runs to 145 residues: Large ribosomal subunit protein uL15 (145 aa).

Composition is skewed to basic residues over residues 1–13 and 19–29; these read MVRERTKKLRGGH and KAGRGKGKKGG. Residues 1-33 form a disordered region; the sequence is MVRERTKKLRGGHYGRGMKAGRGKGKKGGRGNA.

The protein belongs to the universal ribosomal protein uL15 family. Part of the 50S ribosomal subunit.

In terms of biological role, binds to the 23S rRNA. This is Large ribosomal subunit protein uL15 from Thermoplasma volcanium (strain ATCC 51530 / DSM 4299 / JCM 9571 / NBRC 15438 / GSS1).